The sequence spans 499 residues: MTVATEDPADEAAALPGHPQDTYDPEADHECCERVVINISGLRFETQLKTLAQFPETLLGDPKKRMRYFDPLRNEYFFDRNRPSFDAILYYYQSGGRLRRPVNVPLDIFSEEIRFYELGEEAMEMFREDEGYIKEEERPLPENEFQRQVWLLFEYPESSGPARIIAIVSVMVILISIVSFCLETLPIFRDENEDMHGSGMTFHTYSNSTAGYQQSTSFTDPFFIVETLCIIWFSFEFLVRFFACPSKAGFFTNIMNIIDIVAIIPYFITLGTELAEKPEDAQQGQQAMSLAILRVIRLVRVFRIFKLSRHSKGLQILGQTLKASMRELGLLIFFLFIGVILFSSAVYFAEADERDSQFPSIPDAFWWAVVSMTTVGYGDMVPTTIGGKIVGSLCAIAGVLTIALPVPVIVSNFNYFYHRETEGEEQAQYLQVTSCPKIPSSPDLKKSRSASTISKSDYMEIQEGVNNSNEDFREENLKTANCTLANTNYVNITKMLTDV.

Residues 1-26 (MTVATEDPADEAAALPGHPQDTYDPE) are disordered. The tetramerization domain stretch occupies residues 1–125 (MTVATEDPAD…YELGEEAMEM (125 aa)). Topologically, residues 1–160 (MTVATEDPAD…LLFEYPESSG (160 aa)) are cytoplasmic. A helical transmembrane segment spans residues 161 to 182 (PARIIAIVSVMVILISIVSFCL). Over 183–221 (ETLPIFRDENEDMHGSGMTFHTYSNSTAGYQQSTSFTDP) the chain is Extracellular. N-linked (GlcNAc...) asparagine glycosylation is present at Asn207. The chain crosses the membrane as a helical span at residues 222–243 (FFIVETLCIIWFSFEFLVRFFA). Cys244 is lipidated: S-palmitoyl cysteine. Over 244-254 (CPSKAGFFTNI) the chain is Cytoplasmic. A helical membrane pass occupies residues 255 to 275 (MNIIDIVAIIPYFITLGTELA). Topologically, residues 276-289 (EKPEDAQQGQQAMS) are extracellular. A helical; Voltage-sensor membrane pass occupies residues 290–310 (LAILRVIRLVRVFRIFKLSRH). At 311 to 325 (SKGLQILGQTLKASM) the chain is on the cytoplasmic side. Positions 312–325 (KGLQILGQTLKASM) are S4-S5 linker. The chain crosses the membrane as a helical span at residues 326–347 (RELGLLIFFLFIGVILFSSAVY). Residues 348–361 (FAEADERDSQFPSI) are Extracellular-facing. An intramembrane region (helical) is located at residues 362-373 (PDAFWWAVVSMT). Residues 374–379 (TVGYGD) carry the Selectivity filter motif. An intramembrane segment occupies 374–381 (TVGYGDMV). The Extracellular portion of the chain corresponds to 382-388 (PTTIGGK). The helical transmembrane segment at 389–417 (IVGSLCAIAGVLTIALPVPVIVSNFNYFY) threads the bilayer. At 418 to 499 (HRETEGEEQA…VNITKMLTDV (82 aa)) the chain is on the cytoplasmic side. Tyr429 bears the Phosphotyrosine mark. Ser434, Ser440, Ser441, and Ser449 each carry phosphoserine. Tyr458 bears the Phosphotyrosine mark. Phosphoserine is present on Ser468. The PDZ-binding signature appears at 497–499 (TDV).

The protein belongs to the potassium channel family. A (Shaker) (TC 1.A.1.2) subfamily. Kv1.2/KCNA2 sub-subfamily. In terms of assembly, homotetramer and heterotetramer with other channel-forming alpha subunits, such as KCNA1, KCNA4, KCNA5, KCNA6 and KCNA7. Channel activity is regulated by interaction with the beta subunits, including KCNAB1 and KCNAB2. Identified in a complex with KCNA1 and KCNAB2. Identified in a complex with KCNA4 and FYN. Identified in a complex with KCNA5 and KCNAB1. Interacts with the beta subunit KCNAB1. Interacts with PTK2B. Interacts (via C-terminus) with CTTN. Interacts (via N-terminal cytoplasmic domain) with RHOA (GTP-bound form); this regulates channel activity by reducing location at the cell surface in response to CHRM1 activation. Interacts with DRD2. Interacts with SIGMAR1; cocaine consumption leads to increased interaction. Interacts with ADAM22. Interacts with CNTNAP2. Interacts (via C-terminus) with the PDZ domains of DLG1, DLG2 and DLG4. Interacts with ADAM11. Interacts with LYNX1. Phosphorylated on tyrosine residues; phosphorylation increases in response to ischemia. Phosphorylated on tyrosine residues by activated PTK2B/PYK2. Phosphorylation on tyrosine residues suppresses ion channel activity. Phosphorylated on tyrosine residues in response to CHRM1 activation; this abolishes interaction with CTTN. This is probably due to endocytosis of the phosphorylated channel subunits. Phosphorylated on serine residues in response to increased cAMP levels; phosphorylation is apparently not catalyzed by PKA. Post-translationally, N-glycosylated, with complex, sialylated N-glycans. Detected in portal vein myocytes (at protein level). Detected in portal vein. Brain, liver and kidney.

Its subcellular location is the cell membrane. The protein localises to the membrane. It is found in the cell projection. It localises to the axon. The protein resides in the synapse. Its subcellular location is the presynaptic cell membrane. The protein localises to the synaptosome. It is found in the endoplasmic reticulum membrane. It localises to the dendrite. The protein resides in the lamellipodium membrane. Its subcellular location is the cell junction. The protein localises to the paranodal septate junction. The enzyme catalyses K(+)(in) = K(+)(out). Inhibited by 4-aminopyridine (4-AP). Inhibited by dendrotoxin (DTX) and charybdotoxin (CTX), but not by tetraethylammonium (TEA). Inhibited by tityustoxin-K alpha (TsTX-Kalpha), a toxin that is highly specific for KCNA2. Inhibited by maurotoxin. Inhibited by kappaM conotoxins kappaM-RIIIJ and kappaM-RIIIK. Its function is as follows. Voltage-gated potassium channel that mediates transmembrane potassium transport in excitable membranes, primarily in the brain and the central nervous system, but also in the cardiovascular system. Prevents aberrant action potential firing and regulates neuronal output. Forms tetrameric potassium-selective channels through which potassium ions pass in accordance with their electrochemical gradient. The channel alternates between opened and closed conformations in response to the voltage difference across the membrane. Can form functional homotetrameric channels and heterotetrameric channels that contain variable proportions of KCNA1, KCNA2, KCNA4, KCNA5, KCNA6, KCNA7, and possibly other family members as well; channel properties depend on the type of alpha subunits that are part of the channel. Channel properties are modulated by cytoplasmic beta subunits that regulate the subcellular location of the alpha subunits and promote rapid inactivation of delayed rectifier potassium channels. In vivo, membranes probably contain a mixture of heteromeric potassium channel complexes, making it difficult to assign currents observed in intact tissues to any particular potassium channel family member. Homotetrameric KCNA2 forms a delayed-rectifier potassium channel that opens in response to membrane depolarization, followed by slow spontaneous channel closure. In contrast, a heteromultimer formed by KCNA2 and KCNA4 shows rapid inactivation. Regulates neuronal excitability and plays a role as pacemaker in the regulation of neuronal action potentials. KCNA2-containing channels play a presynaptic role and prevent hyperexcitability and aberrant action potential firing. Response to toxins that are selective for KCNA2-containing potassium channels suggests that in Purkinje cells, dendritic subthreshold KCNA2-containing potassium channels prevent random spontaneous calcium spikes, suppressing dendritic hyperexcitability without hindering the generation of somatic action potentials, and thereby play an important role in motor coordination. Plays a role in the induction of long-term potentiation of neuron excitability in the CA3 layer of the hippocampus. May function as down-stream effector for G protein-coupled receptors and inhibit GABAergic inputs to basolateral amygdala neurons. May contribute to the regulation of neurotransmitter release, such as gamma-aminobutyric acid (GABA). Contributes to the regulation of the axonal release of the neurotransmitter dopamine. Reduced KCNA2 expression plays a role in the perception of neuropathic pain after peripheral nerve injury, but not acute pain. Plays a role in the regulation of the time spent in non-rapid eye movement (NREM) sleep. This Oryctolagus cuniculus (Rabbit) protein is Potassium voltage-gated channel subfamily A member 2 (KCNA2).